Consider the following 356-residue polypeptide: Cytochrome b translation regulator cbp7 (356 aa).

Component of a complex, at least composed of cbp7 and cbp8.

It localises to the mitochondrion. Translation factor for cob1/cytochrome b; plays a role in cob1 mRNA stabilization and required for correct folding of the protein. This Schizosaccharomyces pombe (strain 972 / ATCC 24843) (Fission yeast) protein is Cytochrome b translation regulator cbp7.